Consider the following 218-residue polypeptide: Interleukin-37 (218 aa).

Residues 1–40 (MSFVGENSGVKMGSEDWEKDEPQCCLEDPAGSPLEPGPSL) are disordered. Positions 1–45 (MSFVGENSGVKMGSEDWEKDEPQCCLEDPAGSPLEPGPSLPTMNF) are cleaved as a propeptide — removed in mature form. Over residues 13 to 22 (GSEDWEKDEP) the composition is skewed to basic and acidic residues.

It belongs to the IL-1 family. In terms of assembly, interacts with SMAD3. Binds IL18R1, but not to IL1R1, with lower affinity than IL18, and does not seem to act as a receptor antagonist for IL18. Interacts with cargo receptor TMED10; the interaction mediates the translocation from the cytoplasm into the ERGIC (endoplasmic reticulum-Golgi intermediate compartment) and thereby secretion. In terms of processing, proteolytically converted to the mature form by CASP1. In general, low constitutive expression, if any, in healthy tissues; high expression in inflammatory counterparts, including in synovial tissues from individuals with active rheumatoid arthritis. Isoform A, isoform B and isoform C are expressed in testis, colon, placenta, lung and lymph node. Isoform D and isoform E were found only in testis and bone marrow. Whereas only isoform A is found in brain, only isoform B in kidney and only isoform C in heart.

It localises to the cytoplasm. The protein resides in the cytosol. The protein localises to the nucleus. Its subcellular location is the secreted. Functionally, immune regulatory cytokine that acts as a suppressor of innate inflammatory and immune responses involved in curbing excessive inflammation. Signaling can occur via two mechanisms, intracellularly through nuclear translocation with SMAD3 and extracellularly after secretion and binding to its receptor composed of IL18R1 and IL18RAP. Suppresses, or reduces, pro-inflammatory cytokine production, including IL1A and IL6, as well as CCL12, CSF1, CSF2, CXCL13, IL1B, IL23A and IL1RN, but spares anti-inflammatory cytokines. Inhibits dendritic cell activation. In Homo sapiens (Human), this protein is Interleukin-37.